A 680-amino-acid polypeptide reads, in one-letter code: Harmonin-binding protein USHBP1 (680 aa).

Over residues 1 to 15 (MSARATRPRSRRGRH) the composition is skewed to basic residues. Disordered stretches follow at residues 1 to 51 (MSAR…YLGP) and 134 to 161 (KSVE…PGQQ). Residues 179–218 (NREDELACTQASLQDAQAEKETLQRQVQELEDSLMQMEAS) are a coiled coil. Disordered regions lie at residues 220-247 (PTPI…VPQD) and 384-405 (TMEV…PTPE). Coiled coils occupy residues 363–386 (TKGD…ATME) and 467–506 (QIQQ…LRAQ). Positions 524–549 (FAGDGSSGGSSEDPSSEEEAGEDRQQ) are disordered. Positions 573–662 (QELSASLARA…QAEELAVLTA (90 aa)) form a coiled coil.

It belongs to the MCC family. Interacts via its C-terminus with the first PDZ domain of USH1C.

This is Harmonin-binding protein USHBP1 from Mus musculus (Mouse).